Here is a 309-residue protein sequence, read N- to C-terminus: Metaxin-3 (309 aa).

Residues 274-309 form a disordered region; sequence MDDNLRRSPQNRPQKLSTLKPVGGAENSHSSDLLSH. Composition is skewed to polar residues over residues 280–290 and 300–309; these read RSPQNRPQKLS and NSHSSDLLSH.

The protein belongs to the metaxin family. In terms of assembly, part of a large protein complex spanning both mitochondrial membranes termed the mitochondrial intermembrane space bridging (MIB) complex.

Its subcellular location is the mitochondrion. It is found in the mitochondrion outer membrane. Could function in transport of proteins into the mitochondrion. The sequence is that of Metaxin-3 (mtx3) from Xenopus laevis (African clawed frog).